Consider the following 154-residue polypeptide: Myoglobin (154 aa).

The 147-residue stretch at Gly2–Lys148 folds into the Globin domain. A Phosphoserine modification is found at Ser4. Nitrite is bound at residue His65. Residue His65 participates in O2 binding. Residues Thr68 and Thr75 each carry the phosphothreonine modification. Residue His94 coordinates heme b. The residue at position 121 (Ser121) is a Phosphoserine.

The protein belongs to the globin family. As to quaternary structure, monomeric.

Its subcellular location is the cytoplasm. It localises to the sarcoplasm. It carries out the reaction Fe(III)-heme b-[protein] + nitric oxide + H2O = Fe(II)-heme b-[protein] + nitrite + 2 H(+). It catalyses the reaction H2O2 + AH2 = A + 2 H2O. In terms of biological role, monomeric heme protein which primary function is to store oxygen and facilitate its diffusion within muscle tissues. Reversibly binds oxygen through a pentacoordinated heme iron and enables its timely and efficient release as needed during periods of heightened demand. Depending on the oxidative conditions of tissues and cells, and in addition to its ability to bind oxygen, it also has a nitrite reductase activity whereby it regulates the production of bioactive nitric oxide. Under stress conditions, like hypoxia and anoxia, it also protects cells against reactive oxygen species thanks to its pseudoperoxidase activity. This Mus musculus (Mouse) protein is Myoglobin.